A 670-amino-acid polypeptide reads, in one-letter code: uncharacterized protein (670 aa).

10 helical membrane-spanning segments follow: residues 23–42, 47–69, 76–98, 118–140, 153–170, 381–403, 410–432, 437–454, 461–483, and 493–510; these read YALR…YYLN, YWAM…SKSL, LLGA…FFLL, VAYA…VNIT, VCEV…MMIL, QWDA…SAVA, SLLM…GLMV, LWQF…MQLL, FAAL…NPPV, and NLAK…FAIL.

The protein belongs to the aromatic acid exporter ArAE (TC 2.A.85) family.

Its subcellular location is the cell membrane. This is an uncharacterized protein from Escherichia coli O157:H7.